The sequence spans 292 residues: 33 kDa chaperonin (292 aa).

Cystine bridges form between Cys-229–Cys-231 and Cys-262–Cys-265.

It belongs to the HSP33 family. Post-translationally, under oxidizing conditions two disulfide bonds are formed involving the reactive cysteines. Under reducing conditions zinc is bound to the reactive cysteines and the protein is inactive.

It localises to the cytoplasm. Functionally, redox regulated molecular chaperone. Protects both thermally unfolding and oxidatively damaged proteins from irreversible aggregation. Plays an important role in the bacterial defense system toward oxidative stress. In Photobacterium profundum (strain SS9), this protein is 33 kDa chaperonin.